The primary structure comprises 278 residues: 4-hydroxy-3-methylbut-2-enyl diphosphate reductase (278 aa).

C12 serves as a coordination point for [4Fe-4S] cluster. Residues H36 and H70 each coordinate (2E)-4-hydroxy-3-methylbut-2-enyl diphosphate. Dimethylallyl diphosphate-binding residues include H36 and H70. 2 residues coordinate isopentenyl diphosphate: H36 and H70. C92 contributes to the [4Fe-4S] cluster binding site. H120 lines the (2E)-4-hydroxy-3-methylbut-2-enyl diphosphate pocket. A dimethylallyl diphosphate-binding site is contributed by H120. An isopentenyl diphosphate-binding site is contributed by H120. E122 serves as the catalytic Proton donor. T158 contacts (2E)-4-hydroxy-3-methylbut-2-enyl diphosphate. C186 is a binding site for [4Fe-4S] cluster. S214, N216, and S258 together coordinate (2E)-4-hydroxy-3-methylbut-2-enyl diphosphate. The dimethylallyl diphosphate site is built by S214, N216, and S258. Isopentenyl diphosphate is bound by residues S214, N216, and S258.

Belongs to the IspH family. Requires [4Fe-4S] cluster as cofactor.

The enzyme catalyses isopentenyl diphosphate + 2 oxidized [2Fe-2S]-[ferredoxin] + H2O = (2E)-4-hydroxy-3-methylbut-2-enyl diphosphate + 2 reduced [2Fe-2S]-[ferredoxin] + 2 H(+). It catalyses the reaction dimethylallyl diphosphate + 2 oxidized [2Fe-2S]-[ferredoxin] + H2O = (2E)-4-hydroxy-3-methylbut-2-enyl diphosphate + 2 reduced [2Fe-2S]-[ferredoxin] + 2 H(+). Its pathway is isoprenoid biosynthesis; dimethylallyl diphosphate biosynthesis; dimethylallyl diphosphate from (2E)-4-hydroxy-3-methylbutenyl diphosphate: step 1/1. It functions in the pathway isoprenoid biosynthesis; isopentenyl diphosphate biosynthesis via DXP pathway; isopentenyl diphosphate from 1-deoxy-D-xylulose 5-phosphate: step 6/6. Functionally, catalyzes the conversion of 1-hydroxy-2-methyl-2-(E)-butenyl 4-diphosphate (HMBPP) into a mixture of isopentenyl diphosphate (IPP) and dimethylallyl diphosphate (DMAPP). Acts in the terminal step of the DOXP/MEP pathway for isoprenoid precursor biosynthesis. This Campylobacter lari (strain RM2100 / D67 / ATCC BAA-1060) protein is 4-hydroxy-3-methylbut-2-enyl diphosphate reductase.